Reading from the N-terminus, the 241-residue chain is NAD(P)H-quinone oxidoreductase subunit K (241 aa).

Residues Cys-60, Cys-61, Cys-125, and Cys-156 each coordinate [4Fe-4S] cluster. Residues 220 to 241 (SSQKEKITELPEKTEITNTEKD) form a disordered region. A compositionally biased stretch (basic and acidic residues) spans 222-241 (QKEKITELPEKTEITNTEKD).

It belongs to the complex I 20 kDa subunit family. In terms of assembly, NDH-1 can be composed of about 15 different subunits; different subcomplexes with different compositions have been identified which probably have different functions. It depends on [4Fe-4S] cluster as a cofactor.

Its subcellular location is the cellular thylakoid membrane. It carries out the reaction a plastoquinone + NADH + (n+1) H(+)(in) = a plastoquinol + NAD(+) + n H(+)(out). It catalyses the reaction a plastoquinone + NADPH + (n+1) H(+)(in) = a plastoquinol + NADP(+) + n H(+)(out). In terms of biological role, NDH-1 shuttles electrons from an unknown electron donor, via FMN and iron-sulfur (Fe-S) centers, to quinones in the respiratory and/or the photosynthetic chain. The immediate electron acceptor for the enzyme in this species is believed to be plastoquinone. Couples the redox reaction to proton translocation, and thus conserves the redox energy in a proton gradient. Cyanobacterial NDH-1 also plays a role in inorganic carbon-concentration. This chain is NAD(P)H-quinone oxidoreductase subunit K, found in Prochlorococcus marinus (strain MIT 9215).